The primary structure comprises 790 residues: Eukaryotic translation initiation factor 3 subunit C (790 aa).

Positions 1–62 are disordered; sequence MSRFFVSGYN…DGRPSGPAYF (62 aa). The segment covering 14 to 53 has biased composition (acidic residues); sequence SSEEEDLLSSEEELLTSSGEENEDSDFFNDDDESSSDEED. The region spanning 556–728 is the PCI domain; sequence FHQHINLELL…IVFTTDSQRS (173 aa). The interval 748 to 790 is disordered; the sequence is NEKTSSNGYAKKNQSQTQPQAQSKEVEENKFRYANVNTNTDEF. The segment covering 751–770 has biased composition (polar residues); that stretch reads TSSNGYAKKNQSQTQPQAQS.

It belongs to the eIF-3 subunit C family. As to quaternary structure, component of the eukaryotic translation initiation factor 3 (eIF-3) complex.

The protein localises to the cytoplasm. Its function is as follows. Component of the eukaryotic translation initiation factor 3 (eIF-3) complex, which is involved in protein synthesis of a specialized repertoire of mRNAs and, together with other initiation factors, stimulates binding of mRNA and methionyl-tRNAi to the 40S ribosome. The eIF-3 complex specifically targets and initiates translation of a subset of mRNAs involved in cell proliferation. This chain is Eukaryotic translation initiation factor 3 subunit C, found in Lodderomyces elongisporus (strain ATCC 11503 / CBS 2605 / JCM 1781 / NBRC 1676 / NRRL YB-4239) (Yeast).